A 198-amino-acid chain; its full sequence is 5'-deoxynucleotidase ETA_12010 (198 aa).

Substrate contacts are provided by residues 18–19 and H33; that span reads RW. The HD domain maps to 30 to 142; the sequence is VSEHSLQVAM…VKQADALCAY (113 aa). Positions 33, 68, and 69 each coordinate a divalent metal cation. Residues D69, 77 to 80, and D137 each bind substrate; that span reads DLPT. D137 lines the a divalent metal cation pocket.

This sequence belongs to the 5DNU family. In terms of assembly, homodimer. A divalent metal cation is required as a cofactor.

Its subcellular location is the cytoplasm. It carries out the reaction a 2'-deoxyribonucleoside 5'-phosphate + H2O = a 2'-deoxyribonucleoside + phosphate. Catalyzes the strictly specific dephosphorylation of 2'-deoxyribonucleoside 5'-monophosphates. This chain is 5'-deoxynucleotidase ETA_12010, found in Erwinia tasmaniensis (strain DSM 17950 / CFBP 7177 / CIP 109463 / NCPPB 4357 / Et1/99).